The sequence spans 445 residues: Chromosomal replication initiator protein DnaA (445 aa).

A domain I, interacts with DnaA modulators region spans residues 1-69; that stretch reads MEKIWLEAQS…IEAISSLTNI (69 aa). Positions 69–108 are domain II; sequence IKYQVDFKITEKSQVEKKKVDLQATEKIENDSTRNVDFNT. The tract at residues 109-325 is domain III, AAA+ region; the sequence is NLNPKYTFDS…GMLIRLGAYA (217 aa). Residues glycine 153, glycine 155, lysine 156, and threonine 157 each contribute to the ATP site. The segment at 326 to 445 is domain IV, binds dsDNA; the sequence is SLTGSEISLN…VEKMKKELMS (120 aa).

Belongs to the DnaA family. Oligomerizes as a right-handed, spiral filament on DNA at oriC.

The protein localises to the cytoplasm. Functionally, plays an essential role in the initiation and regulation of chromosomal replication. ATP-DnaA binds to the origin of replication (oriC) to initiate formation of the DNA replication initiation complex once per cell cycle. Binds the DnaA box (a 9 base pair repeat at the origin) and separates the double-stranded (ds)DNA. Forms a right-handed helical filament on oriC DNA; dsDNA binds to the exterior of the filament while single-stranded (ss)DNA is stabiized in the filament's interior. The ATP-DnaA-oriC complex binds and stabilizes one strand of the AT-rich DNA unwinding element (DUE), permitting loading of DNA polymerase. After initiation quickly degrades to an ADP-DnaA complex that is not apt for DNA replication. Binds acidic phospholipids. The polypeptide is Chromosomal replication initiator protein DnaA (Geotalea daltonii (strain DSM 22248 / JCM 15807 / FRC-32) (Geobacter daltonii)).